The following is a 331-amino-acid chain: Pseudouridylate synthase TRUB2, mitochondrial (331 aa).

The N-terminal 10 residues, 1–10 (MGSAGLSRLH), are a transit peptide targeting the mitochondrion. Asp-98 (nucleophile) is an active-site residue. A disordered region spans residues 296 to 331 (KSLSPGLDTKQLPSPGWSWDSQGPSSTLGLERGAGQ). Over residues 314–323 (WDSQGPSSTL) the composition is skewed to polar residues.

This sequence belongs to the pseudouridine synthase TruB family. In terms of assembly, forms a regulatory protein-RNA complex, consisting of RCC1L, NGRN, RPUSD3, RPUSD4, TRUB2, FASTKD2 and 16S mt-rRNA.

It is found in the mitochondrion matrix. It catalyses the reaction a uridine in mRNA = a pseudouridine in mRNA. It carries out the reaction uridine(55) in tRNA = pseudouridine(55) in tRNA. In terms of biological role, minor enzyme contributing to the isomerization of uridine to pseudouridine (pseudouridylation) of specific mitochondrial mRNAs (mt-mRNAs) such as COXI and COXIII mt-mRNAs. As a component of a functional protein-RNA module, consisting of RCC1L, NGRN, RPUSD3, RPUSD4, TRUB2, FASTKD2 and 16S mitochondrial ribosomal RNA (16S mt-rRNA), controls 16S mt-rRNA abundance and is required for intra-mitochondrial translation. Also catalyzes pseudouridylation of some tRNAs, including synthesis of pseudouridine(55) from uracil-55, in the psi GC loop of a subset of tRNAs. The chain is Pseudouridylate synthase TRUB2, mitochondrial from Homo sapiens (Human).